A 504-amino-acid chain; its full sequence is MRFFCARCCSFGPEMPAVQLLLLACLVWDVGARTAQLRKANDQSGRCQYTFSVASPNESSCPEQSQAMSVIHNLQRDSSTQRLDLEATKARLSSLESLLHQLTLDQAARPQETQEGLQRELGTLRRERDQLETQTRELETAYSNLLRDKSVLEEEKKRLRQENENLARRLESSSQEVARLRRGQCPQTRDTARAVPPGSREVSTWNLDTLAFQELKSELTEVPASRILKESPSGYLRSGEGDTGCGELVWVGEPLTLRTAETITGKYGVWMRDPKPTYPYTQETTWRIDTVGTDVRQVFEYDLISQFMQGYPSKVHILPRPLESTGAVVYSGSLYFQGAESRTVIRYELNTETVKAEKEIPGAGYHGQFPYSWGGYTDIDLAVDEAGLWVIYSTDEAKGAIVLSKLNPENLELEQTWETNIRKQSVANAFIICGTLYTVSSYTSADATVNFAYDTGTGISKTLTIPFKNRYKYSSMIDYNPLEKKLFAWDNLNMVTYDIKLSKM.

A signal peptide spans 1–32 (MRFFCARCCSFGPEMPAVQLLLLACLVWDVGA). N-linked (GlcNAc...) asparagine glycosylation is present at Asn-57. Positions 74–184 (LQRDSSTQRL…QEVARLRRGQ (111 aa)) form a coiled coil. Disordered stretches follow at residues 106–131 (QAARPQETQEGLQRELGTLRRERDQL) and 170–200 (LESSSQEVARLRRGQCPQTRDTARAVPPGSR). The span at 122–131 (GTLRRERDQL) shows a compositional bias: basic and acidic residues. In terms of domain architecture, Olfactomedin-like spans 244–503 (GCGELVWVGE…MVTYDIKLSK (260 aa)). Residues Cys-245 and Cys-433 are joined by a disulfide bond. 5 residues coordinate Ca(2+): Asp-380, Asn-428, Ala-429, Ile-477, and Asp-478. Residues 502–504 (SKM) carry the Microbody targeting signal motif.

In terms of assembly, homodimer (via N-terminus). Can also form higher oligomers. Interacts with OLFM3, FN1, NRCAM, GLDN and NFASC. Interacts (via N-terminus) with MYL2. Interacts with SFRP1, FRZB, FZD7, FZD10, FZD1 and WIF1; regulates Wnt signaling. Interacts with SNTA1; regulates muscle hypertrophy. Interacts with ERBB2 and ERBB3; activates ERBB2-ERBB3 signaling pathway. Interacts with SNCG; affects its secretion and its aggregation. Post-translationally, different isoforms may arise by post-translational modifications. Glycosylated. In terms of processing, palmitoylated. Post-translationally, undergoes a calcium-dependent proteolytic cleavage at Arg-226 by CAPN2 in the endoplasmic reticulum. The result is the production of two fragments, one of 35 kDa containing the C-terminal olfactomedin-like domain, and another of 20 kDa containing the N-terminal leucine zipper-like domain. Detected in aqueous humor. Detected in the eye (at protein level). Widely expressed. Highly expressed in various types of muscle, ciliary body, papillary sphincter, skeletal muscle, heart, and bone marrow-derived mesenchymal stem cells. Expressed predominantly in the retina. In normal eyes, found in the inner uveal meshwork region and the anterior portion of the meshwork. In contrast, in many glaucomatous eyes, it is found in more regions of the meshwork and seems to be expressed at higher levels than in normal eyes, regardless of the type or clinical severity of glaucoma. The myocilin 35 kDa fragment is detected in aqueous humor and to a lesser extent in iris and ciliary body.

Its subcellular location is the secreted. The protein resides in the golgi apparatus. The protein localises to the cytoplasmic vesicle. It localises to the extracellular space. It is found in the extracellular matrix. Its subcellular location is the extracellular exosome. The protein resides in the mitochondrion. The protein localises to the mitochondrion intermembrane space. It localises to the mitochondrion inner membrane. It is found in the mitochondrion outer membrane. Its subcellular location is the rough endoplasmic reticulum. The protein resides in the cell projection. The protein localises to the cilium. It localises to the endoplasmic reticulum. Its function is as follows. Secreted glycoprotein regulating the activation of different signaling pathways in adjacent cells to control different processes including cell adhesion, cell-matrix adhesion, cytoskeleton organization and cell migration. Promotes substrate adhesion, spreading and formation of focal contacts. Negatively regulates cell-matrix adhesion and stress fiber assembly through Rho protein signal transduction. Modulates the organization of actin cytoskeleton by stimulating the formation of stress fibers through interactions with components of Wnt signaling pathways. Promotes cell migration through activation of PTK2 and the downstream phosphatidylinositol 3-kinase signaling. Plays a role in bone formation and promotes osteoblast differentiation in a dose-dependent manner through mitogen-activated protein kinase signaling. Mediates myelination in the peripheral nervous system through ERBB2/ERBB3 signaling. Plays a role as a regulator of muscle hypertrophy through the components of dystrophin-associated protein complex. Involved in positive regulation of mitochondrial depolarization. Plays a role in neurite outgrowth. May participate in the obstruction of fluid outflow in the trabecular meshwork. This chain is Myocilin (MYOC), found in Homo sapiens (Human).